A 343-amino-acid polypeptide reads, in one-letter code: Ribosomal RNA small subunit methyltransferase C (343 aa).

This sequence belongs to the methyltransferase superfamily. RsmC family. Monomer.

Its subcellular location is the cytoplasm. The enzyme catalyses guanosine(1207) in 16S rRNA + S-adenosyl-L-methionine = N(2)-methylguanosine(1207) in 16S rRNA + S-adenosyl-L-homocysteine + H(+). Functionally, specifically methylates the guanine in position 1207 of 16S rRNA in the 30S particle. This is Ribosomal RNA small subunit methyltransferase C from Escherichia coli O17:K52:H18 (strain UMN026 / ExPEC).